The following is a 371-amino-acid chain: UDP-N-acetylglucosamine--N-acetylmuramyl-(pentapeptide) pyrophosphoryl-undecaprenol N-acetylglucosamine transferase (371 aa).

UDP-N-acetyl-alpha-D-glucosamine-binding positions include 15–17, asparagine 126, arginine 172, serine 199, isoleucine 256, 275–280, and glutamine 301; these read TGG and ALTVSE.

The protein belongs to the glycosyltransferase 28 family. MurG subfamily.

Its subcellular location is the cell inner membrane. It carries out the reaction di-trans,octa-cis-undecaprenyl diphospho-N-acetyl-alpha-D-muramoyl-L-alanyl-D-glutamyl-meso-2,6-diaminopimeloyl-D-alanyl-D-alanine + UDP-N-acetyl-alpha-D-glucosamine = di-trans,octa-cis-undecaprenyl diphospho-[N-acetyl-alpha-D-glucosaminyl-(1-&gt;4)]-N-acetyl-alpha-D-muramoyl-L-alanyl-D-glutamyl-meso-2,6-diaminopimeloyl-D-alanyl-D-alanine + UDP + H(+). Its pathway is cell wall biogenesis; peptidoglycan biosynthesis. Cell wall formation. Catalyzes the transfer of a GlcNAc subunit on undecaprenyl-pyrophosphoryl-MurNAc-pentapeptide (lipid intermediate I) to form undecaprenyl-pyrophosphoryl-MurNAc-(pentapeptide)GlcNAc (lipid intermediate II). The protein is UDP-N-acetylglucosamine--N-acetylmuramyl-(pentapeptide) pyrophosphoryl-undecaprenol N-acetylglucosamine transferase of Francisella tularensis subsp. tularensis (strain FSC 198).